A 1028-amino-acid chain; its full sequence is Beta-galactosidase (1028 aa).

Residues Asn104 and Asp203 each contribute to the substrate site. Asp203 contacts Na(+). The Mg(2+) site is built by Glu418, His420, and Glu463. Residues Glu463 and 539-542 (EYAH) contribute to the substrate site. The Proton donor role is filled by Glu463. Catalysis depends on Glu539, which acts as the Nucleophile. Asn599 is a binding site for Mg(2+). Na(+) contacts are provided by Phe603 and Asn606. The substrate site is built by Asn606 and Trp1004.

The protein belongs to the glycosyl hydrolase 2 family. Homodimer. Requires Mg(2+) as cofactor. Mn(2+) serves as cofactor. It depends on Fe cation as a cofactor. The cofactor is Na(+). K(+) is required as a cofactor.

The catalysed reaction is Hydrolysis of terminal non-reducing beta-D-galactose residues in beta-D-galactosides.. Completely inhibited by Hg(2+), Cu(2+) Ag(2+), and partially inhibited by Zn(2+), imidazole and EDTA. Activated by Ca(2+), Co(2+), Ni(2+). Functionally, this beta-galactosidase is also able to catalyze glycosyl transfer to a series of acceptors, including hexose, pentose, beta- or alpha-disaccharides, hexahydroxy alcohol, cyclitol, and aromatic glycosides, resulting in the production of galacto-oligosaccharides (GOS). The polypeptide is Beta-galactosidase (lacZ) (Enterobacter agglomerans (Erwinia herbicola)).